The chain runs to 660 residues: MKAIVFAYHDIGCVGINALTKAGFDIQAVFTHTDDPNENHFFSSVARLSADLALPVFAPENVNHPLWIERIRELKPDVIFSFYYRDMLSEDILSLASTGAFNLHGSLLPKYRGRAPINWAILNGEVETGVTLHKMVLKPDAGDIIAQYKVAIAETDTALTLHGKIREAAEKLFDQVLPQIKAGIYPAIPQDESQATYFGRRTAVDGEIDWHKSATEINNLVRAVTEPYPGAFTFLGERKITIWRACPLNETHDKQPGTVLSVDPLIIACGKGTLEIINGQSESGLYVQGHRLAVDMSMVTDVRVGPKATTQINHRKRVLILGVNGFIGNHLTERLLRDGNYDIYGMDIGSSAIERFISNPRFHFIEGDINIHTEWIEYHIKKCDVVLPLVAIATPIEYTRNPLRVFELDFEENLKIVRYCVKYNKRIIFPSTSEVYGMCDDKEFDEDDSRLIVGPINKQRWIYSVSKQLLDRVIWAYGEKEGLKFTLFRPFNWMGPRLDNLNSARIGSSRAITQLILNLVEGSPIKLVDGGEQKRCFTDINDGIEALFRIIENREGLCDGQIINIGNPTNEASIRQLAEILLDSFEDHELRDHFPPFAGFKKVESGSYYGKGYQDVEHRKPSIKNAERLLDWKPTIDMKQTINETLDFFLRGAVEELGKN.

The interval 1–304 (MKAIVFAYHD…DMSMVTDVRV (304 aa)) is formyltransferase ArnAFT. The Proton donor; for formyltransferase activity role is filled by His-104. (6R)-10-formyltetrahydrofolate-binding positions include Arg-114 and 136-140 (VLKPD). Residues 314 to 660 (HRKRVLILGV…RGAVEELGKN (347 aa)) are dehydrogenase ArnADH. NAD(+) contacts are provided by residues Asp-347 and 368–369 (DI). UDP-alpha-D-glucuronate-binding positions include Ala-393, Tyr-398, and 432–433 (TS). The active-site Proton acceptor; for decarboxylase activity is Glu-434. UDP-alpha-D-glucuronate-binding positions include Arg-460, Asn-492, 526–535 (KLVDGGEQKR), and Tyr-613. The active-site Proton donor; for decarboxylase activity is the Arg-619.

In the N-terminal section; belongs to the Fmt family. UDP-L-Ara4N formyltransferase subfamily. It in the C-terminal section; belongs to the NAD(P)-dependent epimerase/dehydratase family. UDP-glucuronic acid decarboxylase subfamily. Homohexamer, formed by a dimer of trimers.

The enzyme catalyses UDP-alpha-D-glucuronate + NAD(+) = UDP-beta-L-threo-pentopyranos-4-ulose + CO2 + NADH. It catalyses the reaction UDP-4-amino-4-deoxy-beta-L-arabinose + (6R)-10-formyltetrahydrofolate = UDP-4-deoxy-4-formamido-beta-L-arabinose + (6S)-5,6,7,8-tetrahydrofolate + H(+). It functions in the pathway nucleotide-sugar biosynthesis; UDP-4-deoxy-4-formamido-beta-L-arabinose biosynthesis; UDP-4-deoxy-4-formamido-beta-L-arabinose from UDP-alpha-D-glucuronate: step 1/3. It participates in nucleotide-sugar biosynthesis; UDP-4-deoxy-4-formamido-beta-L-arabinose biosynthesis; UDP-4-deoxy-4-formamido-beta-L-arabinose from UDP-alpha-D-glucuronate: step 3/3. Its pathway is bacterial outer membrane biogenesis; lipopolysaccharide biosynthesis. Its function is as follows. Bifunctional enzyme that catalyzes the oxidative decarboxylation of UDP-glucuronic acid (UDP-GlcUA) to UDP-4-keto-arabinose (UDP-Ara4O) and the addition of a formyl group to UDP-4-amino-4-deoxy-L-arabinose (UDP-L-Ara4N) to form UDP-L-4-formamido-arabinose (UDP-L-Ara4FN). The modified arabinose is attached to lipid A and is required for resistance to polymyxin and cationic antimicrobial peptides. This chain is Bifunctional polymyxin resistance protein ArnA, found in Photorhabdus laumondii subsp. laumondii (strain DSM 15139 / CIP 105565 / TT01) (Photorhabdus luminescens subsp. laumondii).